Consider the following 285-residue polypeptide: Glutamate racemase (285 aa).

Residues 28–29 (DS) and 60–61 (YG) each bind substrate. The Proton donor/acceptor role is filled by Cys-92. 93-94 (NT) contributes to the substrate binding site. Cys-204 functions as the Proton donor/acceptor in the catalytic mechanism. Position 205-206 (205-206 (TH)) interacts with substrate.

Belongs to the aspartate/glutamate racemases family.

The enzyme catalyses L-glutamate = D-glutamate. It functions in the pathway cell wall biogenesis; peptidoglycan biosynthesis. Functionally, provides the (R)-glutamate required for cell wall biosynthesis. This Escherichia coli O9:H4 (strain HS) protein is Glutamate racemase.